The primary structure comprises 197 residues: Adenylate kinase (197 aa).

7–15 is an ATP binding site; that stretch reads ALPGSGKTT.

Belongs to the archaeal adenylate kinase family.

Its subcellular location is the cytoplasm. It catalyses the reaction AMP + ATP = 2 ADP. The polypeptide is Adenylate kinase (adkA) (Pyrobaculum aerophilum (strain ATCC 51768 / DSM 7523 / JCM 9630 / CIP 104966 / NBRC 100827 / IM2)).